An 869-amino-acid polypeptide reads, in one-letter code: DNA mismatch repair protein MutS (869 aa).

Residue 602-609 coordinates ATP; the sequence is GPNMSGKS.

Belongs to the DNA mismatch repair MutS family.

In terms of biological role, this protein is involved in the repair of mismatches in DNA. It is possible that it carries out the mismatch recognition step. This protein has a weak ATPase activity. The sequence is that of DNA mismatch repair protein MutS from Staphylococcus carnosus (strain TM300).